A 317-amino-acid polypeptide reads, in one-letter code: Beta-ketoacyl-[acyl-carrier-protein] synthase III (317 aa).

Catalysis depends on residues cysteine 112 and histidine 244. The segment at 245 to 249 is ACP-binding; that stretch reads QANLR. Asparagine 274 is an active-site residue.

The protein belongs to the thiolase-like superfamily. FabH family. In terms of assembly, homodimer.

The protein localises to the cytoplasm. It catalyses the reaction malonyl-[ACP] + acetyl-CoA + H(+) = 3-oxobutanoyl-[ACP] + CO2 + CoA. It participates in lipid metabolism; fatty acid biosynthesis. In terms of biological role, catalyzes the condensation reaction of fatty acid synthesis by the addition to an acyl acceptor of two carbons from malonyl-ACP. Catalyzes the first condensation reaction which initiates fatty acid synthesis and may therefore play a role in governing the total rate of fatty acid production. Possesses both acetoacetyl-ACP synthase and acetyl transacylase activities. Its substrate specificity determines the biosynthesis of branched-chain and/or straight-chain of fatty acids. The polypeptide is Beta-ketoacyl-[acyl-carrier-protein] synthase III (Escherichia coli O9:H4 (strain HS)).